The sequence spans 332 residues: 2,3-diketo-L-gulonate reductase (332 aa).

Catalysis depends on H44, which acts as the Proton donor. Residues 168–174 (ITMIDMS), 224–225 (WK), and 304–306 (GHE) contribute to the NAD(+) site.

The protein belongs to the LDH2/MDH2 oxidoreductase family. DlgD subfamily. Homodimer.

It is found in the cytoplasm. It carries out the reaction 3-dehydro-L-gulonate + NAD(+) = 2,3-dioxo-L-gulonate + NADH + H(+). The enzyme catalyses 3-dehydro-L-gulonate + NADP(+) = 2,3-dioxo-L-gulonate + NADPH + H(+). Its function is as follows. Catalyzes the reduction of 2,3-diketo-L-gulonate in the presence of NADH, to form 3-keto-L-gulonate. In Citrobacter koseri (strain ATCC BAA-895 / CDC 4225-83 / SGSC4696), this protein is 2,3-diketo-L-gulonate reductase.